The primary structure comprises 364 residues: Palmitoyltransferase ZDHHC9 (364 aa).

Residues Met-1–Lys-35 lie on the Cytoplasmic side of the membrane. Residues Gly-36–Glu-56 traverse the membrane as a helical segment. At Cys-57–Gln-63 the chain is on the lumenal side. Residues Leu-64–Leu-84 form a helical membrane-spanning segment. Topologically, residues Arg-85 to Tyr-183 are cytoplasmic. Residues Lys-139–Leu-189 form the DHHC domain. Cys-169 functions as the S-palmitoyl cysteine intermediate in the catalytic mechanism. Residues Phe-184–Val-204 traverse the membrane as a helical segment. Over Tyr-205 to Glu-228 the chain is Lumenal. A helical transmembrane segment spans residues Val-229–Leu-249. Over Val-250–Lys-364 the chain is Cytoplasmic. The interval Pro-303 to Lys-364 is disordered. The span at Arg-310–Pro-323 shows a compositional bias: polar residues. The segment covering Glu-346–Pro-356 has biased composition (pro residues).

This sequence belongs to the DHHC palmitoyltransferase family. ERF2/ZDHHC9 subfamily. As to quaternary structure, interacts with GOLGA7. In terms of tissue distribution, highly expressed in kidney, skeletal muscle, brain, lung and liver. Absent in thymus, spleen and leukocytes.

Its subcellular location is the endoplasmic reticulum membrane. It localises to the golgi apparatus membrane. The enzyme catalyses L-cysteinyl-[protein] + hexadecanoyl-CoA = S-hexadecanoyl-L-cysteinyl-[protein] + CoA. Palmitoyltransferase that catalyzes the addition of palmitate onto various protein substrates, such as ADRB2, GSDMD, HRAS, NRAS and CGAS. The ZDHHC9-GOLGA7 complex is a palmitoyltransferase specific for HRAS and NRAS. May have a palmitoyltransferase activity toward the beta-2 adrenergic receptor/ADRB2 and therefore regulate G protein-coupled receptor signaling. Acts as a regulator of innate immunity by catalyzing palmitoylation of CGAS, thereby promoting CGAS homodimerization and cyclic GMP-AMP synthase activity. Activates pyroptosis by catalyzing palmitoylation of gasdermin-D (GSDMD), thereby promoting membrane translocation and pore formation of GSDMD. Its function is as follows. (Microbial infection) Through a sequential action with ZDHHC20, rapidly and efficiently palmitoylates SARS coronavirus-2/SARS-CoV-2 spike protein following its synthesis in the endoplasmic reticulum (ER). In the infected cell, promotes spike biogenesis by protecting it from premature ER degradation, increases half-life and controls the lipid organization of its immediate membrane environment. Once the virus has formed, spike palmitoylation controls fusion with the target cell. In Homo sapiens (Human), this protein is Palmitoyltransferase ZDHHC9.